The chain runs to 550 residues: Glucose-6-phosphate isomerase (550 aa).

D-glucose 6-phosphate is bound by residues 164-165 (GS), 215-220 (SKTFTT), glutamine 359, glutamate 363, and histidine 394. The active-site Proton donor is glutamate 363. Residue histidine 394 is part of the active site. Threonine 455 carries the phosphothreonine modification. Lysine 516 contributes to the D-glucose 6-phosphate binding site. Residue lysine 516 is part of the active site.

It belongs to the GPI family. As to quaternary structure, homodimer.

The protein resides in the cytoplasm. The protein localises to the cytosol. The catalysed reaction is alpha-D-glucose 6-phosphate = beta-D-fructose 6-phosphate. It participates in carbohydrate degradation; glycolysis; D-glyceraldehyde 3-phosphate and glycerone phosphate from D-glucose: step 2/4. Its function is as follows. In the cytoplasm, catalyzes the conversion of glucose-6-phosphate to fructose-6-phosphate, the second step in glycolysis, and the reverse reaction during gluconeogenesis. The protein is Glucose-6-phosphate isomerase (pgi1) of Schizosaccharomyces pombe (strain 972 / ATCC 24843) (Fission yeast).